Here is a 384-residue protein sequence, read N- to C-terminus: 23S rRNA (uracil(747)-C(5))-methyltransferase RlmC (384 aa).

[4Fe-4S] cluster contacts are provided by Cys-3, Cys-11, Cys-14, and Cys-87. Residues Gln-212, Phe-241, Glu-262, and Asn-309 each coordinate S-adenosyl-L-methionine. Cys-336 functions as the Nucleophile in the catalytic mechanism.

This sequence belongs to the class I-like SAM-binding methyltransferase superfamily. RNA M5U methyltransferase family. RlmC subfamily.

The catalysed reaction is uridine(747) in 23S rRNA + S-adenosyl-L-methionine = 5-methyluridine(747) in 23S rRNA + S-adenosyl-L-homocysteine + H(+). Functionally, catalyzes the formation of 5-methyl-uridine at position 747 (m5U747) in 23S rRNA. The chain is 23S rRNA (uracil(747)-C(5))-methyltransferase RlmC from Shewanella amazonensis (strain ATCC BAA-1098 / SB2B).